Here is a 129-residue protein sequence, read N- to C-terminus: Small ribosomal subunit protein uS11 (129 aa).

It belongs to the universal ribosomal protein uS11 family. In terms of assembly, part of the 30S ribosomal subunit. Interacts with proteins S7 and S18. Binds to IF-3.

Functionally, located on the platform of the 30S subunit, it bridges several disparate RNA helices of the 16S rRNA. Forms part of the Shine-Dalgarno cleft in the 70S ribosome. This Actinobacillus succinogenes (strain ATCC 55618 / DSM 22257 / CCUG 43843 / 130Z) protein is Small ribosomal subunit protein uS11.